The primary structure comprises 38 residues: Cytochrome b6-f complex subunit 5 (38 aa).

The chain crosses the membrane as a helical span at residues 5–25 (LLCGIVLGLIPVTLLGLFVDA).

It belongs to the PetG family. As to quaternary structure, the 4 large subunits of the cytochrome b6-f complex are cytochrome b6, subunit IV (17 kDa polypeptide, PetD), cytochrome f and the Rieske protein, while the 4 small subunits are PetG, PetL, PetM and PetN. The complex functions as a dimer.

The protein localises to the cellular thylakoid membrane. Its function is as follows. Component of the cytochrome b6-f complex, which mediates electron transfer between photosystem II (PSII) and photosystem I (PSI), cyclic electron flow around PSI, and state transitions. PetG is required for either the stability or assembly of the cytochrome b6-f complex. This Prochlorococcus marinus (strain MIT 9313) protein is Cytochrome b6-f complex subunit 5.